The chain runs to 285 residues: 2-oxoglutarate synthase subunit KorB (285 aa).

As to quaternary structure, heterotetramer of the KorA, KorB, KorC and KorD subunits.

The enzyme catalyses 2 oxidized [2Fe-2S]-[ferredoxin] + 2-oxoglutarate + CoA = succinyl-CoA + 2 reduced [2Fe-2S]-[ferredoxin] + CO2 + H(+). In Methanothermobacter marburgensis (strain ATCC BAA-927 / DSM 2133 / JCM 14651 / NBRC 100331 / OCM 82 / Marburg) (Methanobacterium thermoautotrophicum), this protein is 2-oxoglutarate synthase subunit KorB (korB).